A 178-amino-acid chain; its full sequence is Adenine phosphoribosyltransferase (178 aa).

The protein belongs to the purine/pyrimidine phosphoribosyltransferase family. In terms of assembly, homodimer.

The protein localises to the cytoplasm. The catalysed reaction is AMP + diphosphate = 5-phospho-alpha-D-ribose 1-diphosphate + adenine. Its pathway is purine metabolism; AMP biosynthesis via salvage pathway; AMP from adenine: step 1/1. Its function is as follows. Catalyzes a salvage reaction resulting in the formation of AMP, that is energically less costly than de novo synthesis. The chain is Adenine phosphoribosyltransferase from Bacteroides fragilis (strain YCH46).